Here is a 283-residue protein sequence, read N- to C-terminus: MKQYLDLCQRLIDEGTWVENSRTGKRCLTVINADLVYHVDKNEFPLITTRKSFYKAAIAELLGYIRGYDNAADFRAIGCNTWNANANDNQAWLDNPHRKGIDDMGRVYGVQGRAWSKPDGGCIDQLRKIVDDLSKGIDDRGEILSFYNPGEFHMGCLRPCMHTHNFSLVGDTLHLTSFQRSCDVPLGLNFNQVQVFTLLALMAQITGHKPGTAFHKIVNAHIYEDQLELMQEVQLKREPFTSPKLVINPNIKSLEDLETWVSIDDFEVTGYEHHEAISYPFSV.

R22 is a dUMP binding site. Catalysis depends on C160, which acts as the Nucleophile. Residues 180–183 (RSCD), N191, and 221–223 (HIY) contribute to the dUMP site. A (6R)-5,10-methylene-5,6,7,8-tetrahydrofolate-binding site is contributed by D183. Position 282 (S282) interacts with (6R)-5,10-methylene-5,6,7,8-tetrahydrofolate.

It belongs to the thymidylate synthase family. Bacterial-type ThyA subfamily. In terms of assembly, homodimer.

The protein localises to the cytoplasm. It catalyses the reaction dUMP + (6R)-5,10-methylene-5,6,7,8-tetrahydrofolate = 7,8-dihydrofolate + dTMP. Its pathway is pyrimidine metabolism; dTTP biosynthesis. In terms of biological role, catalyzes the reductive methylation of 2'-deoxyuridine-5'-monophosphate (dUMP) to 2'-deoxythymidine-5'-monophosphate (dTMP) while utilizing 5,10-methylenetetrahydrofolate (mTHF) as the methyl donor and reductant in the reaction, yielding dihydrofolate (DHF) as a by-product. This enzymatic reaction provides an intracellular de novo source of dTMP, an essential precursor for DNA biosynthesis. This is Thymidylate synthase from Shewanella pealeana (strain ATCC 700345 / ANG-SQ1).